A 190-amino-acid chain; its full sequence is Somatotropin (190 aa).

His19 serves as a coordination point for Zn(2+). An intrachain disulfide couples Cys52 to Cys163. Ser105 carries the post-translational modification Phosphoserine. Position 172 (Glu172) interacts with Zn(2+). A disulfide bridge links Cys180 with Cys188.

Belongs to the somatotropin/prolactin family.

It is found in the secreted. Plays an important role in growth control. Its major role in stimulating body growth is to stimulate the liver and other tissues to secrete IGF1. It stimulates both the differentiation and proliferation of myoblasts. It also stimulates amino acid uptake and protein synthesis in muscle and other tissues. The polypeptide is Somatotropin (GH1) (Vulpes vulpes (Red fox)).